Here is a 178-residue protein sequence, read N- to C-terminus: Peptide deformylase (178 aa).

Residues C92 and H134 each coordinate Fe cation. The active site involves E135. Residue H138 participates in Fe cation binding.

The protein belongs to the polypeptide deformylase family. Fe(2+) serves as cofactor.

It carries out the reaction N-terminal N-formyl-L-methionyl-[peptide] + H2O = N-terminal L-methionyl-[peptide] + formate. In terms of biological role, removes the formyl group from the N-terminal Met of newly synthesized proteins. Requires at least a dipeptide for an efficient rate of reaction. N-terminal L-methionine is a prerequisite for activity but the enzyme has broad specificity at other positions. This Alkalilimnicola ehrlichii (strain ATCC BAA-1101 / DSM 17681 / MLHE-1) protein is Peptide deformylase.